The chain runs to 337 residues: Palmitoyltransferase ZDHHC15 (337 aa).

The Cytoplasmic portion of the chain corresponds to 1-20 (MRRGWKMALSGGLRCCRRVL). Residues 21-41 (SWVPVLVIVLVVLWSYYAYVF) traverse the membrane as a helical segment. Over 42 to 56 (ELCLVTVLSPAEKVI) the chain is Lumenal. A helical transmembrane segment spans residues 57–77 (YLILYHAIFVFFTWTYWKSIF). Over 78–172 (TLPQQPNQKF…NNCIGFSNYK (95 aa)) the chain is Cytoplasmic. One can recognise a DHHC domain in the interval 129-179 (RFCDRCHLIKPDRCHHCSVCAMCVLKMDHHCPWVNNCIGFSNYKFFLQFLA). Positions 131, 134, 144, 145, 148, 151, and 158 each coordinate Zn(2+). Cys159 functions as the S-palmitoyl cysteine intermediate in the catalytic mechanism. Position 165 (Cys165) interacts with Zn(2+). Residues 173-193 (FFLQFLAYSVLYCLYIATTVF) form a helical membrane-spanning segment. Topologically, residues 194–210 (SYFIKYWRGELPSVRSK) are lumenal. A helical transmembrane segment spans residues 211–234 (FHVLFLLFVACMFFVSLVILFGYH). The Cytoplasmic segment spans residues 235–337 (CWLVSRNKTT…SSSLAVETET (103 aa)). A disordered region spans residues 306–337 (PLLANEETWEDNEDDNQDYPEGSSSLAVETET). Positions 312 to 323 (ETWEDNEDDNQD) are enriched in acidic residues. Positions 327 to 337 (GSSSLAVETET) are enriched in polar residues.

The protein belongs to the DHHC palmitoyltransferase family. Post-translationally, autopalmitoylated (in vitro). As to expression, expressed in placenta, liver, lung, kidney, heart and brain.

It localises to the golgi apparatus membrane. The protein localises to the postsynaptic density. It catalyses the reaction L-cysteinyl-[protein] + hexadecanoyl-CoA = S-hexadecanoyl-L-cysteinyl-[protein] + CoA. It carries out the reaction L-cysteinyl-[protein] + tetradecanoyl-CoA = S-tetradecanoyl-L-cysteinyl-[protein] + CoA. The enzyme catalyses L-cysteinyl-[protein] + octadecanoyl-CoA = S-octadecanoyl-L-cysteinyl-[protein] + CoA. Palmitoyltransferase that catalyzes the addition of palmitate onto various protein substrates. Has no stringent fatty acid selectivity and in addition to palmitate can also transfer onto target proteins myristate from tetradecanoyl-CoA and stearate from octadecanoyl-CoA. Palmitoylates IGF2R and SORT1, promoting their partitioning to an endosomal membrane subdomain where they can interact with the retromer cargo-selective complex. Thereby, regulates retrograde transport from endosomes to the Golgi apparatus of these lysosomal sorting receptors and plays a role in trafficking of lysosomal proteins. In the nervous system, catalyzes the palmitoylation of DLG4/PSD95 and regulates its synaptic clustering and function in synaptogenesis. Could be involved in the differentiation of dopaminergic neurons and the development of the diencephalon. Could also catalyze the palmitoylation of GAP43. Could also palmitoylate DNAJC5 and regulate its localization to the Golgi membrane. Could also palmitoylate FYN as shown in vitro. May palmitoylate CALHM3 subunit of gustatory voltage-gated ion channels and modulate channel gating and kinetics. In Homo sapiens (Human), this protein is Palmitoyltransferase ZDHHC15.